The primary structure comprises 155 residues: RNA pyrophosphohydrolase (155 aa).

The region spanning 6-148 (GYRANVAIVL…KQEVYRKALT (143 aa)) is the Nudix hydrolase domain. The short motif at 38-59 (GGVATGETPLQAMYRELHEEIG) is the Nudix box element.

This sequence belongs to the Nudix hydrolase family. RppH subfamily. Requires a divalent metal cation as cofactor.

Accelerates the degradation of transcripts by removing pyrophosphate from the 5'-end of triphosphorylated RNA, leading to a more labile monophosphorylated state that can stimulate subsequent ribonuclease cleavage. This is RNA pyrophosphohydrolase from Francisella tularensis subsp. tularensis (strain FSC 198).